We begin with the raw amino-acid sequence, 236 residues long: Putative glutamine amidotransferase-like protein YvdE (236 aa).

The Glutamine amidotransferase type-1 domain maps to 17–236 (SPFWWNKVSY…IFEIFANGTI (220 aa)).

This is Putative glutamine amidotransferase-like protein YvdE (yvdE) from Lactococcus lactis subsp. lactis (strain IL1403) (Streptococcus lactis).